The primary structure comprises 448 residues: Exodeoxyribonuclease 7 large subunit (448 aa).

It belongs to the XseA family. In terms of assembly, heterooligomer composed of large and small subunits.

It localises to the cytoplasm. It carries out the reaction Exonucleolytic cleavage in either 5'- to 3'- or 3'- to 5'-direction to yield nucleoside 5'-phosphates.. Its function is as follows. Bidirectionally degrades single-stranded DNA into large acid-insoluble oligonucleotides, which are then degraded further into small acid-soluble oligonucleotides. This chain is Exodeoxyribonuclease 7 large subunit, found in Shewanella sp. (strain ANA-3).